The following is a 274-amino-acid chain: 3-methyl-2-oxobutanoate hydroxymethyltransferase (274 aa).

Residues D54 and D93 each contribute to the Mg(2+) site. 3-methyl-2-oxobutanoate is bound by residues 54–55, D93, and K121; that span reads DS. E123 contacts Mg(2+). Residue E190 is the Proton acceptor of the active site.

This sequence belongs to the PanB family. As to quaternary structure, homodecamer; pentamer of dimers. Mg(2+) serves as cofactor.

It is found in the cytoplasm. The enzyme catalyses 3-methyl-2-oxobutanoate + (6R)-5,10-methylene-5,6,7,8-tetrahydrofolate + H2O = 2-dehydropantoate + (6S)-5,6,7,8-tetrahydrofolate. It participates in cofactor biosynthesis; (R)-pantothenate biosynthesis; (R)-pantoate from 3-methyl-2-oxobutanoate: step 1/2. Catalyzes the reversible reaction in which hydroxymethyl group from 5,10-methylenetetrahydrofolate is transferred onto alpha-ketoisovalerate to form ketopantoate. The chain is 3-methyl-2-oxobutanoate hydroxymethyltransferase from Ralstonia nicotianae (strain ATCC BAA-1114 / GMI1000) (Ralstonia solanacearum).